We begin with the raw amino-acid sequence, 193 residues long: MNLIPTVIEQTNRGERAYDIYSRLLKDRIIMLGSAIDDNVANSIVSQLLFLESQDPEKDIHIYINSPGGSITAGMAIYDTMQFIKPQVSTICIGMAASMGAFLLAAGEKGKRYALPNSEAMIHQPLGGAQGQATEIEIAAKRILFLREKLNQILADRTGQPLEVLQRDTDRDNFMTAEKALEYGLIDKIFTNR.

Ser98 functions as the Nucleophile in the catalytic mechanism. His123 is an active-site residue.

The protein belongs to the peptidase S14 family. In terms of assembly, fourteen ClpP subunits assemble into 2 heptameric rings which stack back to back to give a disk-like structure with a central cavity, resembling the structure of eukaryotic proteasomes.

It is found in the cytoplasm. The catalysed reaction is Hydrolysis of proteins to small peptides in the presence of ATP and magnesium. alpha-casein is the usual test substrate. In the absence of ATP, only oligopeptides shorter than five residues are hydrolyzed (such as succinyl-Leu-Tyr-|-NHMec, and Leu-Tyr-Leu-|-Tyr-Trp, in which cleavage of the -Tyr-|-Leu- and -Tyr-|-Trp bonds also occurs).. Its function is as follows. Cleaves peptides in various proteins in a process that requires ATP hydrolysis. Has a chymotrypsin-like activity. Plays a major role in the degradation of misfolded proteins. In Bacillus anthracis, this protein is ATP-dependent Clp protease proteolytic subunit 2.